The sequence spans 257 residues: Small ribosomal subunit protein uS4c (257 aa).

S4 RNA-binding domains follow at residues 110–170 (MRLD…QLVN) and 189–255 (KTLP…KNYL).

This sequence belongs to the universal ribosomal protein uS4 family. As to quaternary structure, part of the 30S ribosomal subunit. Contacts protein S5. The interaction surface between S4 and S5 is involved in control of translational fidelity.

The protein resides in the plastid. Its subcellular location is the chloroplast. One of the primary rRNA binding proteins, it binds directly to 16S rRNA where it nucleates assembly of the body of the 30S subunit. In terms of biological role, with S5 and S12 plays an important role in translational accuracy. In Chlamydomonas reinhardtii (Chlamydomonas smithii), this protein is Small ribosomal subunit protein uS4c (rps4).